We begin with the raw amino-acid sequence, 420 residues long: Glucose-1-phosphate adenylyltransferase (420 aa).

Alpha-D-glucose 1-phosphate-binding positions include Tyr-107, Gly-172, 187 to 188 (EK), and Ser-205.

The protein belongs to the bacterial/plant glucose-1-phosphate adenylyltransferase family. In terms of assembly, homotetramer.

It catalyses the reaction alpha-D-glucose 1-phosphate + ATP + H(+) = ADP-alpha-D-glucose + diphosphate. It participates in glycan biosynthesis; glycogen biosynthesis. Functionally, involved in the biosynthesis of ADP-glucose, a building block required for the elongation reactions to produce glycogen. Catalyzes the reaction between ATP and alpha-D-glucose 1-phosphate (G1P) to produce pyrophosphate and ADP-Glc. The protein is Glucose-1-phosphate adenylyltransferase of Bradyrhizobium diazoefficiens (strain JCM 10833 / BCRC 13528 / IAM 13628 / NBRC 14792 / USDA 110).